The sequence spans 200 residues: Late embryogenesis abundant protein 19 (200 aa).

Disordered regions lie at residues 1–145 and 172–200; these read MASH…KTGS and TEDE…ARDH. Composition is skewed to basic and acidic residues over residues 13-23, 30-42, 53-81, 88-97, and 105-114; these read GETKAHTEEKA, SKDK…DRAS, QDTK…KDKT, ARDKAAESKD, and EKTEQAKQKA. Residues 52-81 are a coiled coil; it reads GQDTKEATKEKAQAAKERASETAQAAKDKT. 2 stretches are compositionally biased toward low complexity: residues 115–130 and 186–200; these read AETA…ETAQ and TSAT…ARDH.

The protein belongs to the LEA type 4 family.

Involved in response to stress. This Oryza sativa subsp. japonica (Rice) protein is Late embryogenesis abundant protein 19.